Here is a 322-residue protein sequence, read N- to C-terminus: Triosephosphate isomerase, chloroplastic (322 aa).

The N-terminal 67 residues, 1-67 (MAVVSTSLAS…RRCPRGVVAM (67 aa)), are a transit peptide targeting the chloroplast. Positions 78 and 80 each coordinate substrate. Residue histidine 162 is the Electrophile of the active site. Residue glutamate 232 is the Proton acceptor of the active site.

Belongs to the triosephosphate isomerase family. Homodimer.

It is found in the plastid. Its subcellular location is the chloroplast. The catalysed reaction is D-glyceraldehyde 3-phosphate = dihydroxyacetone phosphate. It participates in carbohydrate biosynthesis; Calvin cycle. This chain is Triosephosphate isomerase, chloroplastic (TPIP1), found in Spinacia oleracea (Spinach).